The following is a 235-amino-acid chain: Glycerol-3-phosphate acyltransferase (235 aa).

6 consecutive transmembrane segments (helical) span residues 4–24 (LLAI…IMAG), 56–76 (SVTL…VAFF), 94–114 (LLAG…GFKG), 125–145 (LIGI…LTVW), 152–172 (VASI…KYVF), and 191–211 (FHDS…LAIL).

This sequence belongs to the PlsY family. As to quaternary structure, probably interacts with PlsX.

The protein resides in the cell inner membrane. It carries out the reaction an acyl phosphate + sn-glycerol 3-phosphate = a 1-acyl-sn-glycero-3-phosphate + phosphate. Its pathway is lipid metabolism; phospholipid metabolism. In terms of biological role, catalyzes the transfer of an acyl group from acyl-phosphate (acyl-PO(4)) to glycerol-3-phosphate (G3P) to form lysophosphatidic acid (LPA). This enzyme utilizes acyl-phosphate as fatty acyl donor, but not acyl-CoA or acyl-ACP. The chain is Glycerol-3-phosphate acyltransferase from Chlorobium luteolum (strain DSM 273 / BCRC 81028 / 2530) (Pelodictyon luteolum).